The following is a 310-amino-acid chain: Glutaminase 1 (310 aa).

Substrate-binding residues include Ser66, Asn117, Glu161, Asn168, Tyr192, Tyr244, and Val262. Lys294 is subject to N6-acetyllysine.

This sequence belongs to the glutaminase family. Homotetramer.

It catalyses the reaction L-glutamine + H2O = L-glutamate + NH4(+). The sequence is that of Glutaminase 1 from Shigella flexneri.